The chain runs to 97 residues: MTDLRHYDVIVSPSITEKSTLVSEQNQVVFNVAKTASKPEIKAAVEALFGVKVTAVNTLIRKGKTRRFRGFAGKLKDVKKAVVTLAEGQSIDVSTGL.

This sequence belongs to the universal ribosomal protein uL23 family. As to quaternary structure, part of the 50S ribosomal subunit. Contacts protein L29, and trigger factor when it is bound to the ribosome.

Functionally, one of the early assembly proteins it binds 23S rRNA. One of the proteins that surrounds the polypeptide exit tunnel on the outside of the ribosome. Forms the main docking site for trigger factor binding to the ribosome. This chain is Large ribosomal subunit protein uL23, found in Agrobacterium fabrum (strain C58 / ATCC 33970) (Agrobacterium tumefaciens (strain C58)).